A 183-amino-acid polypeptide reads, in one-letter code: Copper metallothionein 2 (183 aa).

Residues 1–35 are cys-rich copper-binding 1; it reads MAFNPNPEKTTSCCSTSKAQDKCTCPKGKCECETC. The tract at residues 36–45 is spacer B1; sequence PKSTKTPGSG. Residues 46–79 form a cys-rich copper-binding 2 region; it reads PCNCGVKEKVSTCGCNGSGAACTCPPGQCACDSC. The spacer B2 stretch occupies residues 80–88; it reads PRKAKSVST. The tract at residues 89–110 is cys-rich copper-binding 3; the sequence is CGCGGSAAACSCPPGKCACDSC. Residues 111–120 form a spacer B3 region; that stretch reads PKQAQEKVSS. Residues 121 to 142 are cys-rich copper-binding 4; it reads CACNGSGGACTCPPGKCSCSGC. Positions 143–156 are spacer B4; the sequence is PAQAKENPADQPTT. The tract at residues 157–183 is cys-rich copper-binding 5; that stretch reads CGCQGVGVACTCPPGQCACDGCPAKAK.

This sequence belongs to the metallothionein superfamily.

Its subcellular location is the cytoplasm. The protein resides in the cell cortex. In terms of biological role, copper metallothionein that protects the cell against copper toxicity by tightly chelating copper ions. Required for antioxidant-mediated growth rescue in the presence of fluconazole. Acts as a critical factors for lung colonization and virulence. This is Copper metallothionein 2 from Cryptococcus neoformans var. grubii serotype A (strain H99 / ATCC 208821 / CBS 10515 / FGSC 9487) (Filobasidiella neoformans var. grubii).